A 511-amino-acid polypeptide reads, in one-letter code: Maturase K (511 aa).

The protein belongs to the intron maturase 2 family. MatK subfamily.

The protein localises to the plastid. It is found in the chloroplast. Functionally, usually encoded in the trnK tRNA gene intron. Probably assists in splicing its own and other chloroplast group II introns. The chain is Maturase K from Brachypodium sylvaticum (False brome).